Consider the following 206-residue polypeptide: Acidic proline-rich protein PRP33 (206 aa).

The first 13 residues, 1–13 (MLVVLLTAALLVL), serve as a signal peptide directing secretion. Residues 15–206 (SAHGSDEEVI…EQPSYLWFSS (192 aa)) form a disordered region. Positions 55–71 (ENGDGDDSDDGDDDGSG) are enriched in acidic residues. Tandem repeats lie at residues 80–97 (PPPH…HHHG), 98–115 (PPPS…NPQG), 116–133 (PPPQ…NPQG), 134–152 (PPPQ…KPQG), 153–170 (PPPQ…NPQG), and 171–189 (PPPQ…KPQD). The segment at 80–189 (PPPHGGNHQR…RPPQPRKPQD (110 aa)) is 6 X 18 AA approximate tandem repeats. Over residues 103 to 112 (GPQTSSQPGN) the composition is skewed to low complexity. Positions 113-174 (PQGPPPQGGP…PGNPQGPPPQ (62 aa)) are enriched in pro residues.

The protein localises to the secreted. In terms of biological role, may protect teeth by binding to tannins. This chain is Acidic proline-rich protein PRP33 (Prpg1), found in Rattus norvegicus (Rat).